A 426-amino-acid polypeptide reads, in one-letter code: Glutamate-1-semialdehyde 2,1-aminomutase (426 aa).

Lysine 265 is modified (N6-(pyridoxal phosphate)lysine).

The protein belongs to the class-III pyridoxal-phosphate-dependent aminotransferase family. HemL subfamily. As to quaternary structure, homodimer. It depends on pyridoxal 5'-phosphate as a cofactor.

It is found in the cytoplasm. It carries out the reaction (S)-4-amino-5-oxopentanoate = 5-aminolevulinate. The protein operates within porphyrin-containing compound metabolism; protoporphyrin-IX biosynthesis; 5-aminolevulinate from L-glutamyl-tRNA(Glu): step 2/2. The chain is Glutamate-1-semialdehyde 2,1-aminomutase from Hahella chejuensis (strain KCTC 2396).